Reading from the N-terminus, the 576-residue chain is Putative export ATP-binding/permease protein RC1073 (576 aa).

Residues 20-303 (LIIVMISLLS…IFELLSEMHL (284 aa)) form the ABC transmembrane type-1 domain. The next 6 membrane-spanning stretches (helical) occupy residues 21-41 (IIVM…GSVF), 57-77 (VDNS…ASFF), 135-155 (FLSF…LMFF), 158-178 (FKLA…LIKF), 242-262 (ALFF…VVWI), and 277-297 (IISF…IFEL). The ABC transporter domain occupies 336 to 572 (IEFKNVDFTY…SEIYRNICRE (237 aa)). 371 to 378 (GRSGAGKS) lines the ATP pocket.

It belongs to the ABC transporter superfamily. In terms of assembly, homodimer.

It localises to the cell inner membrane. Functionally, part of an ABC transporter complex. Transmembrane domains (TMD) form a pore in the inner membrane and the ATP-binding domain (NBD) is responsible for energy generation. The sequence is that of Putative export ATP-binding/permease protein RC1073 from Rickettsia conorii (strain ATCC VR-613 / Malish 7).